A 225-amino-acid chain; its full sequence is Thymidylate kinase (225 aa).

An ATP-binding site is contributed by 10–17; sequence GVEGGGKT.

The protein belongs to the thymidylate kinase family.

The catalysed reaction is dTMP + ATP = dTDP + ADP. Functionally, phosphorylation of dTMP to form dTDP in both de novo and salvage pathways of dTTP synthesis. In Trichodesmium erythraeum (strain IMS101), this protein is Thymidylate kinase.